The chain runs to 441 residues: Putative serine/threonine-protein kinase F31E3.2 (441 aa).

A compositionally biased stretch (basic residues) spans 1 to 16; that stretch reads MGNVATRKRPGCHHHI. The tract at residues 1-41 is disordered; the sequence is MGNVATRKRPGCHHHIGRNEENLDDDEDGPAKKRLRIGEPQ. Residues 126 to 381 enclose the Protein kinase domain; sequence FVLERQLGRG…FTVLHAHPFF (256 aa). Residues 132–140 and Lys-156 each bind ATP; that span reads LGRGSFGVV. Asp-253 functions as the Proton acceptor in the catalytic mechanism.

It belongs to the protein kinase superfamily. Ser/Thr protein kinase family.

It catalyses the reaction L-seryl-[protein] + ATP = O-phospho-L-seryl-[protein] + ADP + H(+). The catalysed reaction is L-threonyl-[protein] + ATP = O-phospho-L-threonyl-[protein] + ADP + H(+). This is Putative serine/threonine-protein kinase F31E3.2 from Caenorhabditis elegans.